The following is a 615-amino-acid chain: DNA mismatch repair protein MutL (615 aa).

Residues 363–397 are disordered; it reads FAEPAAREPVAPRYTPAPASGSRPAAPWPNAQPGY. Over residues 364–391 the composition is skewed to low complexity; sequence AEPAAREPVAPRYTPAPASGSRPAAPWP.

This sequence belongs to the DNA mismatch repair MutL/HexB family.

Its function is as follows. This protein is involved in the repair of mismatches in DNA. It is required for dam-dependent methyl-directed DNA mismatch repair. May act as a 'molecular matchmaker', a protein that promotes the formation of a stable complex between two or more DNA-binding proteins in an ATP-dependent manner without itself being part of a final effector complex. This Escherichia coli (strain ATCC 8739 / DSM 1576 / NBRC 3972 / NCIMB 8545 / WDCM 00012 / Crooks) protein is DNA mismatch repair protein MutL.